Here is a 243-residue protein sequence, read N- to C-terminus: Triosephosphate isomerase (243 aa).

9-11 (NWK) serves as a coordination point for substrate. The active-site Electrophile is His-98. Glu-167 serves as the catalytic Proton acceptor. Substrate is bound by residues Gly-173, Ser-205, and 226–227 (GG).

Belongs to the triosephosphate isomerase family. In terms of assembly, homodimer.

Its subcellular location is the cytoplasm. It carries out the reaction D-glyceraldehyde 3-phosphate = dihydroxyacetone phosphate. It participates in carbohydrate biosynthesis; gluconeogenesis. The protein operates within carbohydrate degradation; glycolysis; D-glyceraldehyde 3-phosphate from glycerone phosphate: step 1/1. Its function is as follows. Involved in the gluconeogenesis. Catalyzes stereospecifically the conversion of dihydroxyacetone phosphate (DHAP) to D-glyceraldehyde-3-phosphate (G3P). The polypeptide is Triosephosphate isomerase (Mesomycoplasma hyorhinis (Mycoplasma hyorhinis)).